The following is a 368-amino-acid chain: Leu/Ile/Val-binding protein homolog 3 (368 aa).

A signal peptide spans 1–23 (MNLKLLSSVAFAATIGFASAAYA).

The protein belongs to the leucine-binding protein family.

Component of an amino-acid transport system. This is Leu/Ile/Val-binding protein homolog 3 from Brucella melitensis biotype 1 (strain ATCC 23456 / CCUG 17765 / NCTC 10094 / 16M).